We begin with the raw amino-acid sequence, 296 residues long: uncharacterized protein (296 aa).

10 consecutive transmembrane segments (helical) span residues 8 to 28 (LFVLIAAFFWGTTGTVQALAP), 34 to 54 (LAFGAFRLLIGGSAMLLAVWI), 63 to 83 (WAWPLVFLAAVCMACYQPLFF), 89 to 109 (TGIAVGTVIAIGSAPIIAGTL), 121 to 141 (SWWIATVLALAGCWLLFSDSS), 147 to 167 (VAGVLMALGAGASFAGYTLIS), 183 to 203 (VFMISAILLTPLLWQLDISWI), 208 to 228 (GLGTSLYIGLIATCAAYFLFA), 238 to 258 (AAVTLSLAEPLTASLLGVFFI), and 261 to 281 (MLSPSSWLGIALMMLGLLVIS). EamA domains follow at residues 15–138 (FFWG…LLFS) and 158–282 (ASFA…VISA).

It belongs to the EamA transporter family.

The protein localises to the cell membrane. This is an uncharacterized protein from Bacillus subtilis (strain 168).